Reading from the N-terminus, the 589-residue chain is PTS system mannitol-specific EIICB component (589 aa).

At 1-25 the chain is on the cytoplasmic side; it reads MEEKVSLKVRVQKLGTSLSNMVMPN. A PTS EIIC type-2 domain is found at 14 to 347; it reads LGTSLSNMVM…LHADKSTEDS (334 aa). A helical membrane pass occupies residues 26 to 47; that stretch reads IGAFIAWGVLTALFIADGYLPN. At 48 to 51 the chain is on the extracellular side; that stretch reads EQLA. The chain crosses the membrane as a helical span at residues 52-72; sequence TVVGPMLTYLLPILIGYTGGY. The Cytoplasmic segment spans residues 73–135; that stretch reads MIHGQRGAVV…PGFEMLVNNF (63 aa). The chain crosses the membrane as a helical span at residues 136–157; that stretch reads SAGLVGFALLLLAFYAIGPVVS. Residues 158-166 lie on the Extracellular side of the membrane; that stretch reads TLTGAVGNG. The chain crosses the membrane as a helical span at residues 167-187; the sequence is VEAIVNARLLPMANIIIEPAK. Over 188 to 274 the chain is Cytoplasmic; that stretch reads VLFLNNALNH…VMMKPTLFLA (87 aa). A helical membrane pass occupies residues 275-294; it reads AMAGGISGTFTFQLLDAGLK. Residues 295–316 lie on the Extracellular side of the membrane; it reads SPASPGSIIAIIATAPKGVWPH. The helical transmembrane segment at 317–338 threads the bilayer; sequence LNVLLGVLVAAVVSFLVAALIL. Topologically, residues 339–589 are cytoplasmic; it reads HADKSTEDSL…YDKMAARMYK (251 aa). The PTS EIIB type-2 domain maps to 381-476; it reads EKIIFACDAG…SLTGASPIAE (96 aa). The Phosphocysteine intermediate; for EIIB activity role is filled by Cys387. Cys387 carries the post-translational modification Phosphocysteine; by EIIA.

Homodimer.

The protein localises to the cell membrane. The enzyme catalyses D-mannitol(out) + N(pros)-phospho-L-histidyl-[protein] = D-mannitol 1-phosphate(in) + L-histidyl-[protein]. Its function is as follows. The phosphoenolpyruvate-dependent sugar phosphotransferase system (sugar PTS), a major carbohydrate active transport system, catalyzes the phosphorylation of incoming sugar substrates concomitantly with their translocation across the cell membrane. The enzyme II CmtAB PTS system is involved in D-mannitol transport. In Streptococcus pneumoniae serotype 4 (strain ATCC BAA-334 / TIGR4), this protein is PTS system mannitol-specific EIICB component (mtlA).